We begin with the raw amino-acid sequence, 352 residues long: Alanine racemase (352 aa).

Lys33 (proton acceptor; specific for D-alanine) is an active-site residue. N6-(pyridoxal phosphate)lysine is present on Lys33. Substrate is bound at residue Arg129. Residue Tyr250 is the Proton acceptor; specific for L-alanine of the active site. Met298 serves as a coordination point for substrate.

This sequence belongs to the alanine racemase family. Requires pyridoxal 5'-phosphate as cofactor.

It carries out the reaction L-alanine = D-alanine. It functions in the pathway amino-acid biosynthesis; D-alanine biosynthesis; D-alanine from L-alanine: step 1/1. Its function is as follows. Catalyzes the interconversion of L-alanine and D-alanine. May also act on other amino acids. The protein is Alanine racemase (alr) of Neisseria meningitidis serogroup C / serotype 2a (strain ATCC 700532 / DSM 15464 / FAM18).